Here is a 290-residue protein sequence, read N- to C-terminus: 4-hydroxybenzoate octaprenyltransferase (290 aa).

6 helical membrane-spanning segments follow: residues 41 to 61, 89 to 109, 133 to 153, 158 to 178, 202 to 224, and 269 to 289; these read WPLL…GCAM, WEAV…IQPL, FFAI…PMAF, DTVP…SVAY, FGRF…YVWI, and WLGG…GTAG.

It belongs to the UbiA prenyltransferase family. Requires Mg(2+) as cofactor.

It is found in the cell inner membrane. The catalysed reaction is all-trans-octaprenyl diphosphate + 4-hydroxybenzoate = 4-hydroxy-3-(all-trans-octaprenyl)benzoate + diphosphate. The protein operates within cofactor biosynthesis; ubiquinone biosynthesis. Functionally, catalyzes the prenylation of para-hydroxybenzoate (PHB) with an all-trans polyprenyl group. Mediates the second step in the final reaction sequence of ubiquinone-8 (UQ-8) biosynthesis, which is the condensation of the polyisoprenoid side chain with PHB, generating the first membrane-bound Q intermediate 3-octaprenyl-4-hydroxybenzoate. The polypeptide is 4-hydroxybenzoate octaprenyltransferase (Burkholderia ambifaria (strain MC40-6)).